Consider the following 207-residue polypeptide: Small ribosomal subunit protein uS4c (207 aa).

Positions 92 to 153 constitute an S4 RNA-binding domain; that stretch reads MRLDNILFRL…PKTYQSILSK (62 aa).

It belongs to the universal ribosomal protein uS4 family. As to quaternary structure, part of the 30S ribosomal subunit. Contacts protein S5. The interaction surface between S4 and S5 is involved in control of translational fidelity.

The protein localises to the plastid. The protein resides in the chloroplast. Its function is as follows. One of the primary rRNA binding proteins, it binds directly to 16S rRNA where it nucleates assembly of the body of the 30S subunit. In terms of biological role, with S5 and S12 plays an important role in translational accuracy. The sequence is that of Small ribosomal subunit protein uS4c (rps4) from Equisetum laevigatum (Smooth horsetail).